The following is a 240-amino-acid chain: Protein UL20 homolog (240 aa).

The next 4 helical transmembrane spans lie at 76-96 (VFYI…FFFY), 104-124 (LLFT…IIML), 147-167 (GIIV…TLFI), and 203-225 (VLLV…SFIG).

Belongs to the alphaherpesvirinae UL20 family. In terms of assembly, interacts with gK (via N-terminus); this interaction plays a role in the coordinate transport of UL20 and gK to the trans-Golgi network (TGN), and is required for their cell surface expression. Interacts with gB. Interacts with host STING1; this interaction inhibits host interferon-beta promoter activation.

The protein localises to the virion. The protein resides in the host cell membrane. It localises to the host endosome membrane. Its subcellular location is the host Golgi apparatus membrane. It is found in the host nucleus membrane. Functionally, plays an essential role in egress of virus particles from the nucleus, cytoplasmic envelopment and virus-induced cell fusion. Forms a functional protein complex with gK and this interaction is absolutely essential for their coordinate intracellular transport, gK glycosylation, expression on host cell surface, and function. Together, they modulate gB-mediated virus-induced cell fusion and virion egress and therefore actively participate in these processes. In addition, plays a role in inhibiting the type I interferon responses by suppressing STING1-mediated activation of the IFN-beta promoter. The polypeptide is Protein UL20 homolog (39) (Homo sapiens (Human)).